A 454-amino-acid chain; its full sequence is CCA-adding enzyme (454 aa).

Positions 51 and 54 each coordinate ATP. S51 and K54 together coordinate CTP. D63, D65, and D118 together coordinate Mg(2+). The ATP site is built by H141, K161, and Y170. Residues H141, K161, and Y170 each coordinate CTP.

The protein belongs to the tRNA nucleotidyltransferase/poly(A) polymerase family. Archaeal CCA-adding enzyme subfamily. In terms of assembly, homodimer. Mg(2+) serves as cofactor.

It catalyses the reaction a tRNA precursor + 2 CTP + ATP = a tRNA with a 3' CCA end + 3 diphosphate. It carries out the reaction a tRNA with a 3' CCA end + 2 CTP + ATP = a tRNA with a 3' CCACCA end + 3 diphosphate. Catalyzes the addition and repair of the essential 3'-terminal CCA sequence in tRNAs without using a nucleic acid template. Adds these three nucleotides in the order of C, C, and A to the tRNA nucleotide-73, using CTP and ATP as substrates and producing inorganic pyrophosphate. tRNA 3'-terminal CCA addition is required both for tRNA processing and repair. Also involved in tRNA surveillance by mediating tandem CCA addition to generate a CCACCA at the 3' terminus of unstable tRNAs. While stable tRNAs receive only 3'-terminal CCA, unstable tRNAs are marked with CCACCA and rapidly degraded. This chain is CCA-adding enzyme, found in Methanothermobacter thermautotrophicus (strain ATCC 29096 / DSM 1053 / JCM 10044 / NBRC 100330 / Delta H) (Methanobacterium thermoautotrophicum).